We begin with the raw amino-acid sequence, 181 residues long: Putative J domain-containing protein R266 (181 aa).

Residues 6–70 (NYYQILDVDN…LKRLNYDSYL (65 aa)) form the J domain.

In Acanthamoeba polyphaga (Amoeba), this protein is Putative J domain-containing protein R266.